A 403-amino-acid polypeptide reads, in one-letter code: Phosphopentomutase (403 aa).

Mn(2+)-binding residues include D13, D298, H303, D339, H340, and H351.

This sequence belongs to the phosphopentomutase family. It depends on Mn(2+) as a cofactor.

The protein localises to the cytoplasm. The catalysed reaction is 2-deoxy-alpha-D-ribose 1-phosphate = 2-deoxy-D-ribose 5-phosphate. It carries out the reaction alpha-D-ribose 1-phosphate = D-ribose 5-phosphate. The protein operates within carbohydrate degradation; 2-deoxy-D-ribose 1-phosphate degradation; D-glyceraldehyde 3-phosphate and acetaldehyde from 2-deoxy-alpha-D-ribose 1-phosphate: step 1/2. Its function is as follows. Isomerase that catalyzes the conversion of deoxy-ribose 1-phosphate (dRib-1-P) and ribose 1-phosphate (Rib-1-P) to deoxy-ribose 5-phosphate (dRib-5-P) and ribose 5-phosphate (Rib-5-P), respectively. In Streptococcus pyogenes serotype M3 (strain ATCC BAA-595 / MGAS315), this protein is Phosphopentomutase.